We begin with the raw amino-acid sequence, 120 residues long: MFNKENRQKARVKRHLRVRNKISGTAARPRLAVYRSEKNIYAQIIDDVARITLVSASTLDKEFAEKVGSNKEAAKAVGTMVAKRALEKGIEEVVFDRGGYVYHGRVKELADAAREAGLKF.

The protein belongs to the universal ribosomal protein uL18 family. Part of the 50S ribosomal subunit; part of the 5S rRNA/L5/L18/L25 subcomplex. Contacts the 5S and 23S rRNAs.

In terms of biological role, this is one of the proteins that bind and probably mediate the attachment of the 5S RNA into the large ribosomal subunit, where it forms part of the central protuberance. In Clostridium novyi (strain NT), this protein is Large ribosomal subunit protein uL18.